The sequence spans 535 residues: Beta-glucosidase 20 (535 aa).

The N-terminal stretch at 1 to 24 is a signal peptide; sequence MGRFHKFPLLGLVLFLGLTGSLIA. The a beta-D-glucoside site is built by Gln-56 and His-159. The N-linked (GlcNAc...) asparagine glycan is linked to Asn-187. 204-205 serves as a coordination point for a beta-D-glucoside; that stretch reads NE. Glu-205 serves as the catalytic Proton donor. A disulfide bond links Cys-224 and Cys-235. A beta-D-glucoside-binding residues include Tyr-351 and Glu-424. The active-site Nucleophile is Glu-424. N-linked (GlcNAc...) asparagine glycosylation occurs at Asn-468. Residues Trp-475, 482–483, and Phe-491 each bind a beta-D-glucoside; that span reads EW. N-linked (GlcNAc...) asparagine glycosylation is present at Asn-501. The Prevents secretion from ER signature appears at 532–535; it reads HDEL.

The protein belongs to the glycosyl hydrolase 1 family.

Its subcellular location is the endoplasmic reticulum lumen. The enzyme catalyses Hydrolysis of terminal, non-reducing beta-D-glucosyl residues with release of beta-D-glucose.. The polypeptide is Beta-glucosidase 20 (Arabidopsis thaliana (Mouse-ear cress)).